The sequence spans 227 residues: Esterase Rv3036c (227 aa).

Residues Tyr-3–Ala-23 traverse the membrane as a helical segment.

Belongs to the RsiV family.

The protein resides in the cell membrane. It is found in the secreted. The protein localises to the cell wall. It catalyses the reaction a fatty acid ester + H2O = an aliphatic alcohol + a fatty acid + H(+). It carries out the reaction an acetyl ester + H2O = an aliphatic alcohol + acetate + H(+). The enzyme catalyses a butanoate ester + H2O = an aliphatic alcohol + butanoate + H(+). The catalysed reaction is a hexanoate ester + H2O = an aliphatic alcohol + hexanoate + H(+). It catalyses the reaction a dodecanoate ester + H2O = an aliphatic alcohol + dodecanoate + H(+). It carries out the reaction a tetradecanoate ester + H2O = an aliphatic alcohol + tetradecanoate + H(+). The enzyme catalyses an octanoate ester + H2O = an aliphatic alcohol + octanoate + H(+). Hydrolyzes ester substrates carbon chain lengths ranging from C2 to C14. In vitro, acetate (C2), butyrate (C4) and caprylate (C6) are hydrolyzed with high efficiency. Has lower activity against laurate (C12), myristate (C14) and caproate (C8), and weak activity against palmitate (C16). The protein is Esterase Rv3036c of Mycobacterium tuberculosis (strain ATCC 25618 / H37Rv).